The primary structure comprises 291 residues: Homoserine kinase (291 aa).

79–89 (PLARGLGSSSA) provides a ligand contact to ATP.

Belongs to the GHMP kinase family. Homoserine kinase subfamily.

The protein resides in the cytoplasm. The enzyme catalyses L-homoserine + ATP = O-phospho-L-homoserine + ADP + H(+). Its pathway is amino-acid biosynthesis; L-threonine biosynthesis; L-threonine from L-aspartate: step 4/5. In terms of biological role, catalyzes the ATP-dependent phosphorylation of L-homoserine to L-homoserine phosphate. This is Homoserine kinase from Leuconostoc citreum (strain KM20).